A 238-amino-acid polypeptide reads, in one-letter code: Fatty acid metabolism regulator protein (238 aa).

Positions 6-74 constitute an HTH gntR-type domain; the sequence is KGPASFAEKY…HGKPTRVNNF (69 aa). Positions 34–53 form a DNA-binding region, H-T-H motif; it reads ERELSELIGVTRTTLREVLQ.

As to quaternary structure, homodimer.

The protein resides in the cytoplasm. Its function is as follows. Multifunctional regulator of fatty acid metabolism. The chain is Fatty acid metabolism regulator protein from Shewanella baltica (strain OS223).